The chain runs to 309 residues: tRNA-cytidine(32) 2-sulfurtransferase (309 aa).

The short motif at 57–62 (SGGKDS) is the PP-loop motif element. [4Fe-4S] cluster is bound by residues Cys-132, Cys-135, and Cys-223.

Belongs to the TtcA family. As to quaternary structure, homodimer. Requires Mg(2+) as cofactor. [4Fe-4S] cluster is required as a cofactor.

Its subcellular location is the cytoplasm. It carries out the reaction cytidine(32) in tRNA + S-sulfanyl-L-cysteinyl-[cysteine desulfurase] + AH2 + ATP = 2-thiocytidine(32) in tRNA + L-cysteinyl-[cysteine desulfurase] + A + AMP + diphosphate + H(+). The protein operates within tRNA modification. In terms of biological role, catalyzes the ATP-dependent 2-thiolation of cytidine in position 32 of tRNA, to form 2-thiocytidine (s(2)C32). The sulfur atoms are provided by the cysteine/cysteine desulfurase (IscS) system. The chain is tRNA-cytidine(32) 2-sulfurtransferase from Variovorax paradoxus (strain S110).